Consider the following 125-residue polypeptide: Histone H2B (125 aa).

Residues 1-32 (MAPKVRAAKKGEKRVGKAKSGTAETAKRRRGK) are disordered. Ser112 carries an O-linked (GlcNAc) serine glycan. Residue Lys120 forms a Glycyl lysine isopeptide (Lys-Gly) (interchain with G-Cter in ubiquitin) linkage.

Belongs to the histone H2B family. As to quaternary structure, the nucleosome is a histone octamer containing two molecules each of H2A, H2B, H3 and H4 assembled in one H3-H4 heterotetramer and two H2A-H2B heterodimers. The octamer wraps approximately 147 bp of DNA. Post-translationally, monoubiquitination of Lys-120 gives a specific tag for epigenetic transcriptional activation and is also prerequisite for histone H3 'Lys-4' and 'Lys-79' methylation. In terms of processing, glcNAcylation at Ser-112 promotes monoubiquitination of Lys-120. It fluctuates in response to extracellular glucose, and associates with transcribed genes.

The protein localises to the nucleus. Its subcellular location is the chromosome. Its function is as follows. Core component of nucleosome. Nucleosomes wrap and compact DNA into chromatin, limiting DNA accessibility to the cellular machineries which require DNA as a template. Histones thereby play a central role in transcription regulation, DNA repair, DNA replication and chromosomal stability. DNA accessibility is regulated via a complex set of post-translational modifications of histones, also called histone code, and nucleosome remodeling. The protein is Histone H2B of Acropora formosa (Staghorn coral).